Reading from the N-terminus, the 890-residue chain is uncharacterized protein (890 aa).

The signal sequence occupies residues 1-20; it reads MKILKSLVLLVLFMAMPAKA. 6 consecutive transmembrane segments (helical) span residues 518–538, 567–587, 613–633, 651–671, 684–704, and 775–795; these read AALT…ALKL, TYFF…VVGA, LLFI…IITI, VIAF…IILM, ISTL…FLLI, and FLVL…SYGL. The interval 860–890 is disordered; sequence KARKPEGGEHTNKFLAERNDVPKKEEGERKE. A compositionally biased stretch (basic and acidic residues) spans 862-890; it reads RKPEGGEHTNKFLAERNDVPKKEEGERKE.

It belongs to the TrbL/VirB6 family.

Its subcellular location is the cell membrane. This is an uncharacterized protein from Rickettsia felis (strain ATCC VR-1525 / URRWXCal2) (Rickettsia azadi).